The chain runs to 235 residues: Exosome complex component Rrp4 (235 aa).

The S1 motif domain maps to 67–139; the sequence is GDVVIGLIQS…KTRSPLLTVQ (73 aa). The region spanning 149–205 is the KH domain; it reads GKIVEISPAKVPRVIGRKMSMLKTLEEKTECKIFVARNGRIHLECPNEDLEAIAVMA.

This sequence belongs to the RRP4 family. Component of the archaeal exosome complex. Forms a trimer of Rrp4 and/or Csl4 subunits. The trimer associates with a hexameric ring-like arrangement composed of 3 Rrp41-Rrp42 heterodimers.

It is found in the cytoplasm. Its function is as follows. Non-catalytic component of the exosome, which is a complex involved in RNA degradation. Increases the RNA binding and the efficiency of RNA degradation. Confers strong poly(A) specificity to the exosome. In Aeropyrum pernix (strain ATCC 700893 / DSM 11879 / JCM 9820 / NBRC 100138 / K1), this protein is Exosome complex component Rrp4.